The primary structure comprises 532 residues: uncharacterized protein (532 aa).

Disordered regions lie at residues 26–84 (KALR…TDSE), 97–129 (VFDESVSSDTDSEESHEEKRILPLGTPGQQVGR), and 157–470 (SKAA…HTCQ). Residues 30 to 40 (GNNNGSSTSGG) are compositionally biased toward low complexity. Residues 67–80 (DIISQARRQVSLSR) show a composition bias toward polar residues. The span at 157 to 181 (SKAAGEESKRHAHFESIQEEEKISE) shows a compositional bias: basic and acidic residues. The span at 198–213 (IQSGSESSDSDSIIFD) shows a compositional bias: low complexity. Basic and acidic residues predominate over residues 237–249 (VEKKIEKPAVKEQ). Low complexity-rich tracts occupy residues 259–290 (PTPTESSFESSSDSSSTSESSTSSESSSSASE), 298–315 (ESQVSSSKTSTSKASSSK), and 326–335 (SSSSSASTIS). Basic residues predominate over residues 347–356 (KTKKPDKKRA). Composition is skewed to basic and acidic residues over residues 357-368 (KPDDIRQNKKPE), 389-403 (STVRETNRTLEESLK), 410-419 (KSSEKMEKPR), and 437-448 (RDAEREQDIERR). The span at 449 to 461 (REKRARRFRSRRR) shows a compositional bias: basic residues.

This is an uncharacterized protein from Caenorhabditis elegans.